A 130-amino-acid polypeptide reads, in one-letter code: Phosphoribosyl-AMP cyclohydrolase (130 aa).

Asp-77 lines the Mg(2+) pocket. A Zn(2+)-binding site is contributed by Cys-78. Mg(2+)-binding residues include Asp-79 and Asp-81. Residues Cys-95 and Cys-102 each contribute to the Zn(2+) site.

It belongs to the PRA-CH family. In terms of assembly, homodimer. Mg(2+) serves as cofactor. Requires Zn(2+) as cofactor.

The protein resides in the cytoplasm. It carries out the reaction 1-(5-phospho-beta-D-ribosyl)-5'-AMP + H2O = 1-(5-phospho-beta-D-ribosyl)-5-[(5-phospho-beta-D-ribosylamino)methylideneamino]imidazole-4-carboxamide. It functions in the pathway amino-acid biosynthesis; L-histidine biosynthesis; L-histidine from 5-phospho-alpha-D-ribose 1-diphosphate: step 3/9. Its function is as follows. Catalyzes the hydrolysis of the adenine ring of phosphoribosyl-AMP. The polypeptide is Phosphoribosyl-AMP cyclohydrolase (Pseudomonas putida (strain ATCC 700007 / DSM 6899 / JCM 31910 / BCRC 17059 / LMG 24140 / F1)).